The sequence spans 1050 residues: uncharacterized protein (1050 aa).

Residues 1 to 83 (MARLLTKSSQ…AVKLGTFEGC (83 aa)) are Cytoplasmic-facing. Ser9 and Ser60 each carry phosphoserine. Thr64 carries the phosphothreonine modification. A helical membrane pass occupies residues 84 to 104 (FIPTTLNVLSILLYLRFPWII). Topologically, residues 105–112 (GEAGVLKT) are extracellular. The helical transmembrane segment at 113–133 (LLMLFISYAVGIFTSLSISAI) threads the bilayer. At 134-146 (CTNGMVRGGGAYY) the chain is on the cytoplasmic side. The chain crosses the membrane as a helical span at residues 147–169 (AVSRSIGPELGGSIGLIFYVGQI). Topologically, residues 170-202 (LNTGMNISGFVEPIISIFGKESGTISQFLPEGY) are extracellular. Asn175 carries N-linked (GlcNAc...) asparagine glycosylation. A helical transmembrane segment spans residues 203–223 (WWVFLYTTCVLAMCCILCCLG). The Cytoplasmic portion of the chain corresponds to 224 to 232 (SAIFAKASN). The helical transmembrane segment at 233–253 (ALFVVIILSTISIPISSIFVH) threads the bilayer. Residues 254–295 (PFKDPSLLVHFTGLKWSTLMKNLASAYTENEKGTGYESFKST) lie on the Extracellular side of the membrane. Ser270 is subject to Phosphoserine. Thr271 bears the Phosphothreonine mark. Residues 296-316 (FGVFFPATAGLLAGASMSGDL) traverse the membrane as a helical segment. The Cytoplasmic portion of the chain corresponds to 317–334 (KAPSRSIPKGTISSQATT). Residues 335-355 (FLLYLLVILCVGASVTRTGLL) form a helical membrane-spanning segment. Over 356–368 (LDMDVMEHISLHP) the chain is Extracellular. Residues 369 to 389 (LFIISGILSSGAFSSFMGIFG) traverse the membrane as a helical segment. The Cytoplasmic segment spans residues 390 to 417 (AAKLLQAIARDDLIPGMFFFAKGSSYDD). A helical membrane pass occupies residues 418–438 (IPYVAIGVTYLITQISLFWDI). Over 439–442 (NMLS) the chain is Extracellular. The helical transmembrane segment at 443-463 (SMITMTFLLTFGFINLSCFLL) threads the bilayer. The Cytoplasmic portion of the chain corresponds to 464 to 480 (RISSTPNFRPTFRYFNR). Residues 481–497 (RTTLVGTILSFGVMFYV) traverse the membrane as a helical segment. Topologically, residues 498-499 (DR) are extracellular. The chain crosses the membrane as a helical span at residues 500–520 (LNAFISFLIAGILVVVIYFTC). Topologically, residues 521–1050 (PPKNWGDVSQ…SKSLTITTAL (530 aa)) are cytoplasmic. Phosphoserine is present on Ser901. The segment at 915 to 943 (ETESSFGNRSLSPKQENRRTYSDSTIESS) is disordered. Polar residues predominate over residues 916–928 (TESSFGNRSLSPK). Ser936 carries the post-translational modification Phosphoserine. Thr939 carries the phosphothreonine modification.

The protein belongs to the SLC12A transporter family.

The protein resides in the membrane. This is an uncharacterized protein from Schizosaccharomyces pombe (strain 972 / ATCC 24843) (Fission yeast).